The chain runs to 673 residues: MSEFIKKRIRELVDLINYHDYKYYVEDNPEISDYEYDMLYRELVELEKQYPEYIFPDSPTQRVGGKVKEGFKEVVHRVPLLSLSNVFSEGELYDFDRRLRELLGTDDFNYVVEYKIDGLSVALEYENGLFVRGATRGDGNVGEDVTENLKTIRSIPLKLKDDINIVVRGEVFMPKDEFIKLNQEREENEEPLFANPRNAAAGSLRQLDPRITAQRKLDIFVFNVQWCEKELKTHDEALRYLKYLGFKVSPDYVVCSNIKEAYEAIKKVEEKRGLLPFEIDGAVVKLNQLALRDVAGSTAKSPRWAVAYKFPPEKKETKLIDIEVNVGRTGILTPTAVLEPVRISGSVVSRATLHNMDYIRQKDIRIGDTVVVQKAAEIIPEVVEVVFSKRTGNERIFEMPKKCPVCGADVIKFEDEVAYRCTGVECPAKSYRLILHFVSRDAMDIAGMGEMIVKNLFERGLIKTPADIYDLKFDDLVNLERFGVKSTNNLLKAIEASKKRPLDRLIFALGIRHIGQKAAKTLAEHISSIDDLFTITEEELLKLPDFGEKMAKSVVTFFRQDQTKHLIERLKKAGVNTVAEKKAKSDILKGYTFVLTGALSKYSRSQAKEILESLGARVSESVSKKTTAVIVGEDPGSKLTKAQELNVKILYEQDFERLISAKSHEEVEKILME.

NAD(+) is bound by residues 33-37 (DYEYD), 82-83 (SL), and glutamate 113. The active-site N6-AMP-lysine intermediate is lysine 115. NAD(+) contacts are provided by arginine 136, glutamate 170, lysine 285, and lysine 309. Residues cysteine 403, cysteine 406, cysteine 421, and cysteine 426 each coordinate Zn(2+). In terms of domain architecture, BRCT spans 583 to 672 (AKSDILKGYT…SHEEVEKILM (90 aa)).

This sequence belongs to the NAD-dependent DNA ligase family. LigA subfamily. Requires Mg(2+) as cofactor. Mn(2+) serves as cofactor.

The catalysed reaction is NAD(+) + (deoxyribonucleotide)n-3'-hydroxyl + 5'-phospho-(deoxyribonucleotide)m = (deoxyribonucleotide)n+m + AMP + beta-nicotinamide D-nucleotide.. Its function is as follows. DNA ligase that catalyzes the formation of phosphodiester linkages between 5'-phosphoryl and 3'-hydroxyl groups in double-stranded DNA using NAD as a coenzyme and as the energy source for the reaction. It is essential for DNA replication and repair of damaged DNA. The protein is DNA ligase of Caldicellulosiruptor saccharolyticus (strain ATCC 43494 / DSM 8903 / Tp8T 6331).